The primary structure comprises 253 residues: 2-succinyl-6-hydroxy-2,4-cyclohexadiene-1-carboxylate synthase (253 aa).

Positions 11–147 (PWLVCLHGLF…PEALQDWYQQ (137 aa)) constitute an AB hydrolase-1 domain.

The protein belongs to the AB hydrolase superfamily. MenH family. Monomer.

The catalysed reaction is 5-enolpyruvoyl-6-hydroxy-2-succinyl-cyclohex-3-ene-1-carboxylate = (1R,6R)-6-hydroxy-2-succinyl-cyclohexa-2,4-diene-1-carboxylate + pyruvate. It participates in quinol/quinone metabolism; 1,4-dihydroxy-2-naphthoate biosynthesis; 1,4-dihydroxy-2-naphthoate from chorismate: step 3/7. Its pathway is quinol/quinone metabolism; menaquinone biosynthesis. Functionally, catalyzes a proton abstraction reaction that results in 2,5-elimination of pyruvate from 2-succinyl-5-enolpyruvyl-6-hydroxy-3-cyclohexene-1-carboxylate (SEPHCHC) and the formation of 2-succinyl-6-hydroxy-2,4-cyclohexadiene-1-carboxylate (SHCHC). This is 2-succinyl-6-hydroxy-2,4-cyclohexadiene-1-carboxylate synthase from Pectobacterium atrosepticum (strain SCRI 1043 / ATCC BAA-672) (Erwinia carotovora subsp. atroseptica).